A 339-amino-acid chain; its full sequence is 4-hydroxythreonine-4-phosphate dehydrogenase (339 aa).

The substrate site is built by His-141 and Thr-142. Residues His-171, His-215, and His-270 each contribute to the a divalent metal cation site. Positions 278, 287, and 296 each coordinate substrate.

This sequence belongs to the PdxA family. Homodimer. Requires Zn(2+) as cofactor. The cofactor is Mg(2+). Co(2+) is required as a cofactor.

The protein resides in the cytoplasm. It catalyses the reaction 4-(phosphooxy)-L-threonine + NAD(+) = 3-amino-2-oxopropyl phosphate + CO2 + NADH. It participates in cofactor biosynthesis; pyridoxine 5'-phosphate biosynthesis; pyridoxine 5'-phosphate from D-erythrose 4-phosphate: step 4/5. Its function is as follows. Catalyzes the NAD(P)-dependent oxidation of 4-(phosphooxy)-L-threonine (HTP) into 2-amino-3-oxo-4-(phosphooxy)butyric acid which spontaneously decarboxylates to form 3-amino-2-oxopropyl phosphate (AHAP). The sequence is that of 4-hydroxythreonine-4-phosphate dehydrogenase from Geobacter metallireducens (strain ATCC 53774 / DSM 7210 / GS-15).